The sequence spans 864 residues: Protein 4.1 (864 aa).

Composition is skewed to polar residues over residues 1–16 (MTTEKSLVTEAENSQH) and 27–41 (NSGQQEPQQEESCQT). Disordered regions lie at residues 1-122 (MTTE…GTSL), 136-170 (EPELKTDPSLDLHSLSSAETQPAQEELREDPDFEI), and 182-202 (IEVKEESPQSKAETELKASQK). Serine 14 is subject to Phosphoserine. Threonine 60 is subject to Phosphothreonine; by CDK1. Residues 61 to 75 (PTHEDLTKNKERTSE) are compositionally biased toward basic and acidic residues. A compositionally biased stretch (low complexity) spans 76–87 (SRGLSRLFSSFL). Phosphoserine is present on residues serine 84, serine 85, serine 95, serine 104, serine 121, serine 149, serine 151, serine 152, serine 188, and serine 191. Residues 101–117 (EVESDKEKGEGGQKEIE) show a composition bias toward basic and acidic residues. Positions 149–158 (SLSSAETQPA) are enriched in polar residues. A compositionally biased stretch (basic and acidic residues) spans 182–199 (IEVKEESPQSKAETELKA). Residues 210–491 (MHCKVSLLDD…EHHTFFRLTS (282 aa)) form the FERM domain. Tyrosine 222 is subject to Phosphotyrosine. Position 378 is a phosphothreonine (threonine 378). Positions 494–614 (TIPKSKFLAL…QAEPEPTEAW (121 aa)) are hydrophilic. Disordered regions lie at residues 518 to 572 (RQAS…VAEG) and 586 to 611 (KAQKETVKAEVKKEDEPPEQAEPEPT). Phosphoserine is present on residues serine 521, serine 540, serine 542, and serine 555. Over residues 587–600 (AQKETVKAEVKKED) the composition is skewed to basic and acidic residues. The span at 601-610 (EPPEQAEPEP) shows a compositional bias: acidic residues. The spectrin--actin-binding stretch occupies residues 615-713 (KVEKTHIEVT…WDKRLSTHSP (99 aa)). Tyrosine 660 is subject to Phosphotyrosine; by EGFR. Residues serine 664, serine 674, serine 684, and serine 709 each carry the phosphoserine modification. Serine 712 is subject to Phosphoserine; by CDK1. The tract at residues 714-864 (FRTLNINGQI…VHQETEIADE (151 aa)) is C-terminal (CTD). Phosphothreonine is present on residues threonine 736 and threonine 859.

In terms of assembly, binds with a high affinity to glycophorin and with lower affinity to band III protein. Associates with the nuclear mitotic apparatus. Interacts with calmodulin. Interacts with CPAP. Interacts with DLG1. Also found to associate with contractile apparatus and tight junctions. Interacts with NUMA1; this interaction is negatively regulated by CDK1 during metaphase and promotes anaphase-specific localization of NUMA1 in symmetrically dividing cells. Interacts with ATP2B1; regulates small intestinal calcium absorption through regulation of membrane expression of ATP2B1. Post-translationally, phosphorylated at multiple sites by different protein kinases and each phosphorylation event selectively modulates the protein's functions. In terms of processing, phosphorylation on Tyr-660 reduces the ability of 4.1 to promote the assembly of the spectrin/actin/4.1 ternary complex. O-glycosylated; contains N-acetylglucosamine side chains in the C-terminal domain.

It localises to the cytoplasm. The protein resides in the cytoskeleton. The protein localises to the cell cortex. Its subcellular location is the nucleus. In terms of biological role, protein 4.1 is a major structural element of the erythrocyte membrane skeleton. It plays a key role in regulating membrane physical properties of mechanical stability and deformability by stabilizing spectrin-actin interaction. Recruits DLG1 to membranes. Required for dynein-dynactin complex and NUMA1 recruitment at the mitotic cell cortex during anaphase. This chain is Protein 4.1, found in Homo sapiens (Human).